Consider the following 1009-residue polypeptide: MKKKNWIYALIVTLIIIIAIVSMIFFVQTKYGDQSEKGSQSVSNKNNKIHIAIVNEDQPTTYNGKKVELGQAFIKRLANEKNYKFETVTRNVAESGLKNGGYQVMIVIPENFSKLAMQLDAKTPSKISLQYKTAVGQKEEVAKNTEKVVSNVLNDFNKNLVEIYLTSIIDNLHNAQKNVGAIMTREHGVNSKFSNYLLNPINDFPELFTDTLVNSISANKDITKWFQTYNKSLLSANSDTFRVNTDYNVSTLIEKQNSLFDEHNTAMDKMLQDYKSQKDSVELDNYINALKQMDSQIDQQSSMQDTGKEEYKQTVKENLDKLREIIQSQESPFSKGMIEDYRKQLTESLQDELANNKDLQDALNSIKMNNAQFAENLEKQLHDDIVKEPDSDTTFIYNMSKQDFIAAGLNEDEANKYEAIVKEAKRYKNEYNLKKPLAEHINLTDYDNQVAQDTSSLINDGVKVQRTETIKSNDINQLTVATDPHFNFEGDIKINGKKYDIKDQSVQLDTSNKEYKVEVNGVAKLKKDAEKDFLKDKTMHLQLLFGQANRQDEPNDKKATSVVDVTLNHNLDGRLSKDALSQQLSALSRFDAHYKMYTDTKGREDKPFDNKRLIDMMVDQVINDMESFKDDKVAVLHQIDSMEENSDKLIDDILNNKKNTTKNKEDISKLIDQLENVKKTFAEEPQEPKIDKGKNDEFNTMSSNLDKEISRISEKSTQLLSDTQESKTIADSVSGQLNQLDNNVNKLHATGRALGVRANDLNRQMAKNDKDNELFAKEFKKVLQNSKDGDRQNQALKAFMSNPVQKKNLENVLANNGNTDVISPTLFVLLMYLLSMITAYIFYSYERAKGQMNFIKDDYSSKNNLWNNAITSGVIGATGLVEGLIVGLIAMNKFHVLAGYRAKFILMVILTMMVFVLINTYLLRQVKSIGMFLMIAALGLYFVAMNNLKAAGQGVTNKISPLSYIDNMFFNYLNAEHPIGLALVILTVLVIIGFVLNMFIKHFKKERLI.

A run of 6 helical transmembrane segments spans residues I7–V27, I822–F842, A869–I889, K903–L923, S928–L948, and I979–F999.

This sequence belongs to the EsaA family. In terms of assembly, homodimer. Interacts with EssB.

It localises to the cell membrane. Its function is as follows. Component of the type VII secretion system (Ess). Provides together with EssB and other components such as EssC and EssE a secretion platform across the cytoplasmic membrane in the host. The polypeptide is Type VII secretion system accessory factor EsaA (Staphylococcus aureus (strain MRSA252)).